A 307-amino-acid polypeptide reads, in one-letter code: 4-hydroxy-3-methylbut-2-enyl diphosphate reductase (307 aa).

Position 13 (Cys-13) interacts with [4Fe-4S] cluster. (2E)-4-hydroxy-3-methylbut-2-enyl diphosphate-binding residues include His-42 and His-75. Dimethylallyl diphosphate contacts are provided by His-42 and His-75. The isopentenyl diphosphate site is built by His-42 and His-75. Residue Cys-97 participates in [4Fe-4S] cluster binding. His-125 lines the (2E)-4-hydroxy-3-methylbut-2-enyl diphosphate pocket. His-125 lines the dimethylallyl diphosphate pocket. Position 125 (His-125) interacts with isopentenyl diphosphate. Catalysis depends on Glu-127, which acts as the Proton donor. Thr-165 is a binding site for (2E)-4-hydroxy-3-methylbut-2-enyl diphosphate. Position 195 (Cys-195) interacts with [4Fe-4S] cluster. (2E)-4-hydroxy-3-methylbut-2-enyl diphosphate contacts are provided by Ser-223, Ser-224, Asn-225, and Ser-267. Ser-223, Ser-224, Asn-225, and Ser-267 together coordinate dimethylallyl diphosphate. Residues Ser-223, Ser-224, Asn-225, and Ser-267 each coordinate isopentenyl diphosphate.

This sequence belongs to the IspH family. [4Fe-4S] cluster serves as cofactor.

The enzyme catalyses isopentenyl diphosphate + 2 oxidized [2Fe-2S]-[ferredoxin] + H2O = (2E)-4-hydroxy-3-methylbut-2-enyl diphosphate + 2 reduced [2Fe-2S]-[ferredoxin] + 2 H(+). It catalyses the reaction dimethylallyl diphosphate + 2 oxidized [2Fe-2S]-[ferredoxin] + H2O = (2E)-4-hydroxy-3-methylbut-2-enyl diphosphate + 2 reduced [2Fe-2S]-[ferredoxin] + 2 H(+). It participates in isoprenoid biosynthesis; dimethylallyl diphosphate biosynthesis; dimethylallyl diphosphate from (2E)-4-hydroxy-3-methylbutenyl diphosphate: step 1/1. The protein operates within isoprenoid biosynthesis; isopentenyl diphosphate biosynthesis via DXP pathway; isopentenyl diphosphate from 1-deoxy-D-xylulose 5-phosphate: step 6/6. Its function is as follows. Catalyzes the conversion of 1-hydroxy-2-methyl-2-(E)-butenyl 4-diphosphate (HMBPP) into a mixture of isopentenyl diphosphate (IPP) and dimethylallyl diphosphate (DMAPP). Acts in the terminal step of the DOXP/MEP pathway for isoprenoid precursor biosynthesis. This Chlamydia trachomatis serovar L2b (strain UCH-1/proctitis) protein is 4-hydroxy-3-methylbut-2-enyl diphosphate reductase.